Consider the following 249-residue polypeptide: Granaticin polyketide synthase putative ketoacyl reductase 2 (249 aa).

12–36 (LVTGSSSGIGQTVAQRLAAEGYRVV) contributes to the NAD(+) binding site. Position 144 (serine 144) interacts with substrate. Tyrosine 157 acts as the Proton acceptor in catalysis.

This sequence belongs to the short-chain dehydrogenases/reductases (SDR) family.

It participates in antibiotic biosynthesis; granaticin biosynthesis. The polypeptide is Granaticin polyketide synthase putative ketoacyl reductase 2 (gra-orf6) (Streptomyces violaceoruber).